We begin with the raw amino-acid sequence, 78 residues long: Defensin-like protein 287 (78 aa).

The first 24 residues, methionine 1–serine 24, serve as a signal peptide directing secretion. 3 cysteine pairs are disulfide-bonded: cysteine 39–cysteine 59, cysteine 45–cysteine 64, and cysteine 51–cysteine 66.

This sequence belongs to the DEFL family.

It is found in the secreted. The sequence is that of Defensin-like protein 287 from Arabidopsis thaliana (Mouse-ear cress).